The chain runs to 695 residues: Scarecrow-like protein 31 (695 aa).

Disordered regions lie at residues 105–136 and 234–260; these read VISD…NSSN and ISKT…RSKQ. Residues 113–136 are compositionally biased toward low complexity; it reads SSIPNNSITTSSSSNSGDYSNSSN. Residues 233 to 266 adopt a coiled-coil conformation; it reads AISKTRKNHHEREEEEDDLEEARRRSKQFAVNEE. The region spanning 306-693 is the GRAS domain; the sequence is AKKKSRAVDF…RILFSSSCWV (388 aa). Residues 313–377 are leucine repeat I (LRI); it reads VDFRTLLTLC…EGSTGTMIQS (65 aa). The segment at 396–461 is VHIID; that stretch reads YSVFLSASPF…PGLRKLRITG (66 aa). The VHIID motif lies at 427-431; the sequence is LHIVD. Residues 477–509 are leucine repeat II (LRII); that stretch reads DTGRRLTEYCKRFGVPFEYNAIASKNWETIKME. The segment at 519–614 is PFYRE; it reads LAVNAVLRFK…GEFYGREVMN (96 aa). The interval 617–693 is SAW; it reads ACEGVDRVER…RILFSSSCWV (77 aa).

The protein belongs to the GRAS family. As to expression, expressed in seedlings, roots, cotyledons, leaves and sepals.

The protein resides in the nucleus. Its function is as follows. Probable transcription factor involved in plant development. The sequence is that of Scarecrow-like protein 31 (SCL31) from Arabidopsis thaliana (Mouse-ear cress).